The sequence spans 916 residues: Probable dipeptidyl-aminopeptidase B (916 aa).

2 disordered regions span residues 1-35 (MGRT…SGLS) and 67-86 (DAEA…KLGS). Residues 1–92 (MGRTGDLENA…KLGSGSRTRQ (92 aa)) are Cytoplasmic-facing. Low complexity predominate over residues 21 to 35 (TSGTSSRSSTDSGLS). The chain crosses the membrane as a helical; Signal-anchor for type II membrane protein span at residues 93–113 (IFWALVILCLGGWVLALVLFL). Over 114-916 (THGRASSQTA…VKRSVPAFAH (803 aa)) the chain is Vacuolar. N-linked (GlcNAc...) asparagine glycans are attached at residues Asn349 and Asn640. The active-site Charge relay system is Ser754. Asn808 and Asn813 each carry an N-linked (GlcNAc...) asparagine glycan. Catalysis depends on charge relay system residues Asp831 and His864.

Belongs to the peptidase S9B family.

It localises to the vacuole membrane. It catalyses the reaction Release of an N-terminal dipeptide, Xaa-Yaa-|-Zaa-, from a polypeptide, preferentially when Yaa is Pro, provided Zaa is neither Pro nor hydroxyproline.. Its function is as follows. Type IV dipeptidyl-peptidase which removes N-terminal dipeptides sequentially from polypeptides having unsubstituted N-termini provided that the penultimate residue is proline. This Aspergillus flavus (strain ATCC 200026 / FGSC A1120 / IAM 13836 / NRRL 3357 / JCM 12722 / SRRC 167) protein is Probable dipeptidyl-aminopeptidase B (dapB).